A 154-amino-acid polypeptide reads, in one-letter code: UPF0178 protein SPO3827 (154 aa).

Belongs to the UPF0178 family.

The polypeptide is UPF0178 protein SPO3827 (Ruegeria pomeroyi (strain ATCC 700808 / DSM 15171 / DSS-3) (Silicibacter pomeroyi)).